Consider the following 800-residue polypeptide: Phenylalanine--tRNA ligase beta subunit (800 aa).

Residues 39–154 form the tRNA-binding domain; it reads TKDIKKLVVG…EAVKPGTDAL (116 aa). Residues 408–483 enclose the B5 domain; the sequence is SFVTPIKITA…RIYGYDDIPS (76 aa). Positions 461, 467, 470, and 471 each coordinate Mg(2+). The region spanning 708-800 is the FDX-ACB domain; that stretch reads PRFPGVTRDI…ALKKHGAIIR (93 aa).

This sequence belongs to the phenylalanyl-tRNA synthetase beta subunit family. Type 1 subfamily. Tetramer of two alpha and two beta subunits. Mg(2+) serves as cofactor.

The protein localises to the cytoplasm. It catalyses the reaction tRNA(Phe) + L-phenylalanine + ATP = L-phenylalanyl-tRNA(Phe) + AMP + diphosphate + H(+). The chain is Phenylalanine--tRNA ligase beta subunit from Staphylococcus epidermidis (strain ATCC 35984 / DSM 28319 / BCRC 17069 / CCUG 31568 / BM 3577 / RP62A).